The primary structure comprises 372 residues: Protein phosphatase Mn(2+)-dependent 1K (372 aa).

The N-terminal 29 residues, 1–29 (MLSAAFITLLRSGGNQVKKRVLLSSILLQ), are a transit peptide targeting the mitochondrion. A critical for association with the BCKDH complex region spans residues 46 to 61 (RCSRFDPDGSGQPATW). Positions 94–346 (NVGCASLIGK…DNSTAVVVPF (253 aa)) constitute a PPM-type phosphatase domain. The Mn(2+) site is built by Asp-127 and Gly-128. The residue at position 248 (Ser-248) is a Phosphoserine. Residues Asp-298 and Asp-337 each contribute to the Mn(2+) site.

The protein belongs to the PP2C family. As to quaternary structure, monomer. Interacts with E1 and E2 components of the branched-chain alpha-ketoacid dehydrogenase (BCKDH) complex; this interaction requires colocalization in mitochondria. Interacts with BCKDHA but not with BCKDHB of the E1 component. Interacts with the 24-meric E2 core composed of DBT monomers with a 24:1 stoichiometry; the N-terminal region (residues 49-61) of PPM1K and C-terminal linker of the lipoyl domain of DBT (residues 145-160) are critical for this interaction, whereas the lipoyl prosthetic group is dispensable. Competes with BCKDK for binding to the E2 core; this interaction is modulated by branched-chain alpha-keto acids. At steady state, BCKDH holoenzyme preferentially binds BCKDK and BCKDHA is phosphorylated. In response to high levels of branched-chain alpha-keto acids, the inhibitory BCKDK is replaced by activating PPM1K leading to BCKDHA dephosphorylation and BCAA degradation. It depends on Mn(2+) as a cofactor. In terms of tissue distribution, highly expressed in the heart, kidney, brain and liver and to a lesser extent in testis, lung, spleen and adipose tissue. Very low amount in muscle (at protein level). Also expressed in the thymus (at protein level) and the diaphragm. Significantly reduced in hypertrophied hearts.

Its subcellular location is the mitochondrion matrix. It carries out the reaction O-phospho-L-seryl-[3-methyl-2-oxobutanoate dehydrogenase] + H2O = L-seryl-[3-methyl-2-oxobutanoate dehydrogenase] + phosphate. The catalysed reaction is O-phospho-L-seryl-[protein] + H2O = L-seryl-[protein] + phosphate. The protein operates within protein modification. In terms of biological role, serine/threonine-protein phosphatase component of macronutrients metabolism. Forms a functional kinase and phosphatase pair with BCKDK, serving as a metabolic regulatory node that coordinates branched-chain amino acids (BCAAs) with glucose and lipid metabolism via two distinct phosphoprotein targets: mitochondrial BCKDHA subunit of the branched-chain alpha-ketoacid dehydrogenase (BCKDH) complex and cytosolic ACLY, a lipogenic enzyme of Krebs cycle. At high levels of branched-chain ketoacids, dephosphorylates and activates mitochondrial BCKDH complex, a multisubunit complex consisting of three multimeric components each involved in different steps of BCAA catabolism: E1 composed of BCKDHA and BCKDHB, E2 core composed of DBT monomers, and E3 composed of DLD monomers. Tightly associates with the E2 component of BCKDH complex and dephosphorylates BCKDHA on Ser-334. Regulates the reversible phosphorylation of ACLY in response to changes in cellular carbohydrate abundance such as occurs during fasting to feeding metabolic transition. At fasting state, appears to dephosphorylate ACLY on Ser-455 and inactivate it. Refeeding stimulates MLXIPL/ChREBP transcription factor, leading to increased BCKDK to PPM1K expression ratio, phosphorylation and activation of ACLY that ultimately results in the generation of malonyl-CoA and oxaloacetate immediate substrates of de novo lipogenesis and gluconeogenesis, respectively. Recognizes phosphosites having SxS or RxxS motifs and strictly depends on Mn(2+) ions for the phosphatase activity. Regulates Ca(2+)-induced opening of mitochondrial transition pore and apoptotic cell death. This is Protein phosphatase Mn(2+)-dependent 1K from Mus musculus (Mouse).